We begin with the raw amino-acid sequence, 129 residues long: Putative reactive intermediate deaminase TdcF (129 aa).

Position 58 is an N6-(pyridoxal phosphate)lysine (lysine 58). Substrate contacts are provided by residues 105–107 (RSC) and glutamate 120.

It belongs to the RutC family. In terms of assembly, homotrimer.

It participates in amino-acid degradation; L-threonine degradation via propanoate pathway. May be a post-translational regulator that controls the metabolic fate of L-threonine or the potentially toxic intermediate 2-ketobutyrate. The protein is Putative reactive intermediate deaminase TdcF (tdcF) of Escherichia coli O6:H1 (strain CFT073 / ATCC 700928 / UPEC).